A 248-amino-acid polypeptide reads, in one-letter code: Ras-like protein family member 11B (248 aa).

A small GTPase-like region spans residues 29–246; that stretch reads AGRRLVKIAV…ALSAKVRTVT (218 aa). Residues 40-47, 87-94, and 152-155 each bind GTP; these read GASGVGKT, DTPGIQVH, and NKAD. The tract at residues 205–226 is disordered; sequence QQPSSTPEKRRTSLIPRPKSPN.

This sequence belongs to the small GTPase superfamily. Ras family. In terms of tissue distribution, widely expressed with highest levels in placenta and primary macrophages.

It catalyses the reaction GTP + H2O = GDP + phosphate + H(+). This Homo sapiens (Human) protein is Ras-like protein family member 11B.